Here is a 438-residue protein sequence, read N- to C-terminus: Protein maelstrom 1 (438 aa).

Positions 2–69 (APKKRNGFMT…LERTAKKERL (68 aa)) form a DNA-binding region, HMG box. Positions 374 to 438 (KEMGSRDLSP…NMGAGKKIAR (65 aa)) are disordered. The segment covering 381-391 (LSPSSSHQSVS) has biased composition (polar residues).

The protein belongs to the maelstrom family.

The protein localises to the cytoplasm. It is found in the nucleus. Involved both in the piRNA and miRNA metabolic processes. As a component of the meiotic nuage, plays a central role during oogenesis by repressing transposable elements and preventing their mobilization, which is essential for the germline integrity. Repression of transposable elements is mediated via the piRNA metabolic process, which mediates the repression of transposable elements during meiosis by forming complexes composed of piRNAs and Piwi proteins and governs the repression of transposons. As a nuclear component, it is required for proper differentiation in the germline stem cell (GSC) lineage by repressing microRNA-7 (miR-7), thereby acting as an indirect regulator of bag-of-marbles (Bam). Acts by binding to the promoter of miR-7 gene and repressing its expression; miR-7 repression alleviates the Bam repression by miR-7, thereby allowing differentiation in the germline stem cell (GSC) lineage. This Drosophila persimilis (Fruit fly) protein is Protein maelstrom 1 (mael1).